The primary structure comprises 375 residues: Chaperone protein DnaJ (375 aa).

The region spanning 5 to 69 is the J domain; sequence DYYEVLGVSK…QKRAQYDQFG (65 aa). The segment at 132-214 adopts a CR-type zinc-finger fold; sequence GKETIIEIPR…CGGTGKVKKR (83 aa). Residues Cys145, Cys148, Cys162, Cys165, Cys188, Cys191, Cys202, and Cys205 each coordinate Zn(2+). CXXCXGXG motif repeat units follow at residues 145 to 152, 162 to 169, 188 to 195, and 202 to 209; these read CETCKGSG, CSHCGGSG, CHHCEGTG, and CSDCGGTG.

Belongs to the DnaJ family. As to quaternary structure, homodimer. It depends on Zn(2+) as a cofactor.

The protein resides in the cytoplasm. In terms of biological role, participates actively in the response to hyperosmotic and heat shock by preventing the aggregation of stress-denatured proteins and by disaggregating proteins, also in an autonomous, DnaK-independent fashion. Unfolded proteins bind initially to DnaJ; upon interaction with the DnaJ-bound protein, DnaK hydrolyzes its bound ATP, resulting in the formation of a stable complex. GrpE releases ADP from DnaK; ATP binding to DnaK triggers the release of the substrate protein, thus completing the reaction cycle. Several rounds of ATP-dependent interactions between DnaJ, DnaK and GrpE are required for fully efficient folding. Also involved, together with DnaK and GrpE, in the DNA replication of plasmids through activation of initiation proteins. This chain is Chaperone protein DnaJ, found in Bacillus velezensis (strain DSM 23117 / BGSC 10A6 / LMG 26770 / FZB42) (Bacillus amyloliquefaciens subsp. plantarum).